A 423-amino-acid polypeptide reads, in one-letter code: Glucose-1-phosphate adenylyltransferase (423 aa).

Alpha-D-glucose 1-phosphate is bound by residues Tyr-107, Gly-172, 187–188 (EK), and Ser-205.

Belongs to the bacterial/plant glucose-1-phosphate adenylyltransferase family. As to quaternary structure, homotetramer.

It carries out the reaction alpha-D-glucose 1-phosphate + ATP + H(+) = ADP-alpha-D-glucose + diphosphate. The protein operates within glycan biosynthesis; glycogen biosynthesis. Functionally, involved in the biosynthesis of ADP-glucose, a building block required for the elongation reactions to produce glycogen. Catalyzes the reaction between ATP and alpha-D-glucose 1-phosphate (G1P) to produce pyrophosphate and ADP-Glc. This chain is Glucose-1-phosphate adenylyltransferase, found in Albidiferax ferrireducens (strain ATCC BAA-621 / DSM 15236 / T118) (Rhodoferax ferrireducens).